Consider the following 383-residue polypeptide: S-adenosylmethionine synthase (383 aa).

H15 is an ATP binding site. D17 is a binding site for Mg(2+). E43 is a binding site for K(+). The L-methionine site is built by E56 and Q99. Residues 99 to 109 are flexible loop; that stretch reads QSPDINQGVDR. ATP-binding positions include 164–166, 230–231, D239, 245–246, A262, and K266; these read DAK, RF, and RK. Position 239 (D239) interacts with L-methionine. Position 270 (K270) interacts with L-methionine.

Belongs to the AdoMet synthase family. Homotetramer; dimer of dimers. The cofactor is Mg(2+). Requires K(+) as cofactor.

It is found in the cytoplasm. It catalyses the reaction L-methionine + ATP + H2O = S-adenosyl-L-methionine + phosphate + diphosphate. Its pathway is amino-acid biosynthesis; S-adenosyl-L-methionine biosynthesis; S-adenosyl-L-methionine from L-methionine: step 1/1. Functionally, catalyzes the formation of S-adenosylmethionine (AdoMet) from methionine and ATP. The overall synthetic reaction is composed of two sequential steps, AdoMet formation and the subsequent tripolyphosphate hydrolysis which occurs prior to release of AdoMet from the enzyme. In Shewanella denitrificans (strain OS217 / ATCC BAA-1090 / DSM 15013), this protein is S-adenosylmethionine synthase.